A 546-amino-acid polypeptide reads, in one-letter code: Glutamyl-tRNA(Gln) amidotransferase subunit A, chloroplastic/mitochondrial (546 aa).

A disordered region spans residues 21–52 (KRRRFHSSTPLFLSQPQTLASTDPPSSPPQSQ). The segment covering 27–43 (SSTPLFLSQPQTLASTD) has biased composition (polar residues). Catalysis depends on charge relay system residues Lys123 and Ser198. The active-site Acyl-ester intermediate is Ser222.

Belongs to the amidase family. GatA subfamily. Subunit of the heterotrimeric GatCAB amidotransferase (AdT) complex, composed of A, B and C subunits.

The protein resides in the mitochondrion. The protein localises to the plastid. It localises to the chloroplast stroma. The catalysed reaction is L-glutamyl-tRNA(Gln) + L-glutamine + ATP + H2O = L-glutaminyl-tRNA(Gln) + L-glutamate + ADP + phosphate + H(+). In terms of biological role, allows the formation of correctly charged Gln-tRNA(Gln) through the transamidation of misacylated Glu-tRNA(Gln) in chloroplasts and mitochondria. The reaction takes place in the presence of glutamine and ATP through an activated gamma-phospho-Glu-tRNA(Gln). The protein is Glutamyl-tRNA(Gln) amidotransferase subunit A, chloroplastic/mitochondrial of Vitis vinifera (Grape).